The sequence spans 226 residues: Orotate phosphoribosyltransferase (226 aa).

Residues lysine 26, 73–74, arginine 100, lysine 101, lysine 104, histidine 106, and 128–136 contribute to the 5-phospho-alpha-D-ribose 1-diphosphate site; these read YK and EDVTTSGKS. Threonine 132 and arginine 161 together coordinate orotate.

It belongs to the purine/pyrimidine phosphoribosyltransferase family. PyrE subfamily. In terms of assembly, homodimer. Mg(2+) serves as cofactor.

The catalysed reaction is orotidine 5'-phosphate + diphosphate = orotate + 5-phospho-alpha-D-ribose 1-diphosphate. The protein operates within pyrimidine metabolism; UMP biosynthesis via de novo pathway; UMP from orotate: step 1/2. Catalyzes the transfer of a ribosyl phosphate group from 5-phosphoribose 1-diphosphate to orotate, leading to the formation of orotidine monophosphate (OMP). This is Orotate phosphoribosyltransferase from Agathobacter rectalis (strain ATCC 33656 / DSM 3377 / JCM 17463 / KCTC 5835 / VPI 0990) (Eubacterium rectale).